A 225-amino-acid polypeptide reads, in one-letter code: C-reactive protein (225 aa).

Residues 1-18 form the signal peptide; the sequence is MLVVFLCLLSVTLEATEG. A Pentraxin (PTX) domain is found at 23 to 225; sequence SGKVLQFKTA…TGNVLVATDN (203 aa). Residues C54 and C116 are joined by a disulfide bond. Ca(2+) is bound by residues D78, D157, P158, D159, and Q169.

Belongs to the pentraxin family. Homotrimer. It depends on Ca(2+) as a cofactor.

The protein localises to the secreted. In terms of biological role, displays several functions associated with host defense: it promotes agglutination, bacterial capsular swelling, phagocytosis, and complement fixation through its calcium-dependent binding to phosphorylcholine. This is C-reactive protein from Danio rerio (Zebrafish).